Consider the following 276-residue polypeptide: Formamidopyrimidine-DNA glycosylase (276 aa).

Proline 2 serves as the catalytic Schiff-base intermediate with DNA. The active-site Proton donor is the glutamate 3. Catalysis depends on lysine 58, which acts as the Proton donor; for beta-elimination activity. Residues histidine 92, arginine 111, and lysine 154 each contribute to the DNA site. An FPG-type zinc finger spans residues 239 to 273 (QVYGHAGEECNNCGTILEKIKVNGRGTTFCPHCQV). Residue arginine 263 is the Proton donor; for delta-elimination activity of the active site.

Belongs to the FPG family. In terms of assembly, monomer. Zn(2+) is required as a cofactor.

The catalysed reaction is Hydrolysis of DNA containing ring-opened 7-methylguanine residues, releasing 2,6-diamino-4-hydroxy-5-(N-methyl)formamidopyrimidine.. The enzyme catalyses 2'-deoxyribonucleotide-(2'-deoxyribose 5'-phosphate)-2'-deoxyribonucleotide-DNA = a 3'-end 2'-deoxyribonucleotide-(2,3-dehydro-2,3-deoxyribose 5'-phosphate)-DNA + a 5'-end 5'-phospho-2'-deoxyribonucleoside-DNA + H(+). Functionally, involved in base excision repair of DNA damaged by oxidation or by mutagenic agents. Acts as a DNA glycosylase that recognizes and removes damaged bases. Has a preference for oxidized purines, such as 7,8-dihydro-8-oxoguanine (8-oxoG). Has AP (apurinic/apyrimidinic) lyase activity and introduces nicks in the DNA strand. Cleaves the DNA backbone by beta-delta elimination to generate a single-strand break at the site of the removed base with both 3'- and 5'-phosphates. The polypeptide is Formamidopyrimidine-DNA glycosylase (Lactobacillus johnsonii (strain CNCM I-12250 / La1 / NCC 533)).